We begin with the raw amino-acid sequence, 1243 residues long: Interphotoreceptor matrix proteoglycan 2 (1243 aa).

Residues 1–27 (MIMFLPVGRMSLGILILFLTGGNLVSA) form the signal peptide. Over 28–1106 (SEERQEPMHA…EFVSEPFVIG (1079 aa)) the chain is Extracellular. A disordered region spans residues 205–234 (GLASESSAASPQESISNEIENVTEEPTQPA). Low complexity predominate over residues 207-220 (ASESSAASPQESIS). Residues 221-230 (NEIENVTEEP) show a composition bias toward polar residues. N-linked (GlcNAc...) asparagine glycosylation is present at asparagine 225. The SEA 1 domain occupies 235–349 (AEQIAEFSIQ…KPTAVYTISN (115 aa)). Positions 255–263 (RDPSSALYR) are hyaluronan-binding motif involved in chondroitin sulfate A-binding. Residues asparagine 297, asparagine 316, and asparagine 366 are each glycosylated (N-linked (GlcNAc...) asparagine). O-linked (GalNAc...) threonine glycans are attached at residues threonine 427, threonine 428, and threonine 429. Asparagine 582 carries N-linked (GlcNAc...) asparagine glycosylation. Threonine 701, threonine 704, and threonine 712 each carry an O-linked (GalNAc...) threonine glycan. Residues 748-762 (EDMVHTESSSHKELD) show a composition bias toward basic and acidic residues. The tract at residues 748 to 768 (EDMVHTESSSHKELDSEVPVS) is disordered. 2 O-linked (GalNAc...) threonine glycosylation sites follow: threonine 817 and threonine 888. The SEA 2 domain maps to 900–1013 (GALVVFFSLR…YSLDVESGDE (114 aa)). Asparagine 945 and asparagine 959 each carry an N-linked (GlcNAc...) asparagine glycan. EGF-like domains are found at residues 1013–1054 (EANP…LPCQ) and 1055–1096 (SLCD…QHCE). 6 disulfides stabilise this stretch: cysteine 1017–cysteine 1028, cysteine 1022–cysteine 1039, cysteine 1041–cysteine 1053, cysteine 1057–cysteine 1070, cysteine 1064–cysteine 1080, and cysteine 1082–cysteine 1095. The interval 1083-1091 (RVGSNWWYR) is hyaluronan-binding motif involved in chondroitin sulfate C-binding. A helical membrane pass occupies residues 1107–1127 (ITIASVVSFLLVASAVVFFLV). The interval 1128-1136 (KMLQAQNVR) is hyaluronan-binding motif involved in chondroitin sulfate A- and C-binding. The Cytoplasmic segment spans residues 1128–1243 (KMLQAQNVRR…FVREHQMEEL (116 aa)). A hyaluronan-binding motif involved in chondroitin sulfate C-binding region spans residues 1139 to 1147 (RQRPTSSSR). The tract at residues 1212 to 1220 (KEEIQERMR) is hyaluronan-binding motif involved in chondroitin sulfate A- and C-binding motif.

As to expression, expressed in the retina (at protein level). Expressed in the pineal gland.

It is found in the photoreceptor outer segment membrane. The protein localises to the photoreceptor inner segment membrane. The protein resides in the secreted. Its subcellular location is the extracellular space. It localises to the extracellular matrix. It is found in the interphotoreceptor matrix. In terms of biological role, chondroitin sulfate- and hyaluronan-binding proteoglycan involved in the organization of interphotoreceptor matrix; may participate in the maturation and maintenance of the light-sensitive photoreceptor outer segment. Binds heparin. The protein is Interphotoreceptor matrix proteoglycan 2 (Impg2) of Mus musculus (Mouse).